Consider the following 797-residue polypeptide: MGSQQSKLDFRNAVLRLHEERNIPKFDLIWERLWTLPETTEDVFHLMSIDDLTKVKDNAPENLQTIIAVLWDKLEDLQKETLFDDPAAPTTKCALNCMRLLTRLMPIIFEDKSMLEWFDYFAWTVPKDPNINTPRGASFLNTVVDYLFLINFTIPAHNDLTHGVHYCIWETGVVYHPTMLKERSYELHRVEVLRLLLSLFSEEIYRTDGNGSSCCAYVASIANRRLVLCLLSSLINTAMRFNTMFWKPEFLPLDNSVAHMSLIEYCFSVLLILMSEENNNGTPCYNNYRSSKNTLPKNYFSILLSKLQPYSDFQIILDGMSRLLYPPMQSTIPKRSSLIMFDYYPLVLIFCKLFIHYNERFFHYLIDTDRAIDLFIFLLYLSFEYLGDPSTYNHLKLCVILLKRLTAEKYFCKRLNKPFQQQTALPISMPVPFEGGTYADFTIIAISLLVQYTKDYHSEIAQMLCCSLCYLCLYAQNLNSHSSQSLFELFQSASYPGFLISNDVNHKILKYVIGAINNAIQYAQKYNAPLLYFFSMHKDYIEAVSALSFDAIMSVRNSSAEGDSAYWTRNGKTFSSKAFDSILLSRLRYVRSKSPTPYYPIESSEFGFTNLKDVTSKDEITDGFDKALRSNSLRTHRDSRPVQPLLKQRPQLHRALTESATLHGNDRSLEDTDEAKVEPIAHSVDYTFKPTVEWWNKWWPSLNFRTMLDIFTDLSLKISDMKKAGHPASEIMAMIKTQKYPATNQPYIPKYRTKEWRQQLANFARLFAWQVSCDLDSHKREGPGIFEGTDVKIFDSF.

This sequence belongs to the hid-1 family.

It is found in the cytoplasm. The protein localises to the nucleus. This chain is Hid-1 family protein P27G11.12, found in Schizosaccharomyces pombe (strain 972 / ATCC 24843) (Fission yeast).